A 55-amino-acid polypeptide reads, in one-letter code: Photosystem II reaction center X protein (55 aa).

Residues Ile-24 to Trp-44 form a helical membrane-spanning segment.

Belongs to the PsbX family. Type 2 subfamily. In terms of assembly, PSII consists of a core antenna complex that captures photons, and an electron transfer chain that converts photonic excitation into a charge separation. PSII forms dimeric complexes.

The protein localises to the cellular thylakoid membrane. Its function is as follows. Involved in the binding and/or turnover of quinones at the Q(B) site of Photosystem II. The polypeptide is Photosystem II reaction center X protein (Prochlorococcus marinus (strain SARG / CCMP1375 / SS120)).